A 413-amino-acid polypeptide reads, in one-letter code: 26S proteasome regulatory subunit 6B homolog (413 aa).

A disordered region spans residues 1–30 (MATAMVLDPKPAEKLPATRPETSITDVPSD). Positions 32–80 (EDDLYARLKSLQRQLEFIEIQEEYVKDELKNLRREHLRAQEEVKRIQSV) form a coiled coil. ATP is bound at residue 201–208 (GPPGTGKT).

Belongs to the AAA ATPase family.

The protein localises to the cytoplasm. It localises to the nucleus. Functionally, the 26S proteasome is involved in the ATP-dependent degradation of ubiquitinated proteins. The regulatory (or ATPase) complex confers ATP dependency and substrate specificity to the 26S complex. The chain is 26S proteasome regulatory subunit 6B homolog from Solanum tuberosum (Potato).